The following is a 1146-amino-acid chain: ATP-dependent helicase/deoxyribonuclease subunit B (1146 aa).

A UvrD-like helicase ATP-binding domain is found at 1 to 280 (MSLRFIYGRA…LNSKPLFRFS (280 aa)). 8 to 15 (GRAGSGKT) is a binding site for ATP. The UvrD-like helicase C-terminal domain occupies 276 to 584 (LFRFSQSPEL…LVGSLERSRS (309 aa)). Cys786, Cys1105, Cys1108, and Cys1114 together coordinate [4Fe-4S] cluster.

Belongs to the helicase family. AddB/RexB type 1 subfamily. As to quaternary structure, heterodimer of AddA and AddB. The cofactor is Mg(2+). [4Fe-4S] cluster serves as cofactor.

In terms of biological role, the heterodimer acts as both an ATP-dependent DNA helicase and an ATP-dependent, dual-direction single-stranded exonuclease. Recognizes the chi site generating a DNA molecule suitable for the initiation of homologous recombination. The AddB subunit has 5' -&gt; 3' nuclease activity but not helicase activity. In Acetivibrio thermocellus (strain ATCC 27405 / DSM 1237 / JCM 9322 / NBRC 103400 / NCIMB 10682 / NRRL B-4536 / VPI 7372) (Clostridium thermocellum), this protein is ATP-dependent helicase/deoxyribonuclease subunit B.